A 325-amino-acid chain; its full sequence is tRNA N6-adenosine threonylcarbamoyltransferase (325 aa).

Fe cation-binding residues include H107, H111, and Y127. Substrate is bound by residues 127–131 (YVSGG), D159, G172, E176, and N257. D285 contacts Fe cation.

This sequence belongs to the KAE1 / TsaD family. As to quaternary structure, monomer. Component of the KEOPS complex that consists of Kae1, Bud32, Cgi121 and Pcc1; the whole complex dimerizes. Fe(2+) is required as a cofactor.

It is found in the cytoplasm. The catalysed reaction is L-threonylcarbamoyladenylate + adenosine(37) in tRNA = N(6)-L-threonylcarbamoyladenosine(37) in tRNA + AMP + H(+). Required for the formation of a threonylcarbamoyl group on adenosine at position 37 (t(6)A37) in tRNAs that read codons beginning with adenine. Is a component of the KEOPS complex that is probably involved in the transfer of the threonylcarbamoyl moiety of threonylcarbamoyl-AMP (TC-AMP) to the N6 group of A37. Kae1 likely plays a direct catalytic role in this reaction, but requires other protein(s) of the complex to fulfill this activity. In Thermococcus kodakarensis (strain ATCC BAA-918 / JCM 12380 / KOD1) (Pyrococcus kodakaraensis (strain KOD1)), this protein is tRNA N6-adenosine threonylcarbamoyltransferase.